The primary structure comprises 105 residues: Cuticle protein AMP2 (105 aa).

Positions 1–21 (DRDAQTLTDERSDQGDGNFRY) are disordered. One can recognise a Chitin-binding type R&amp;R domain in the interval 16-81 (DGNFRYEFET…PSSDLLPVGP (66 aa)).

In terms of tissue distribution, arthrodial membrane.

The sequence is that of Cuticle protein AMP2 from Homarus americanus (American lobster).